The following is a 305-amino-acid chain: D-alanine--D-alanine ligase (305 aa).

The ATP-grasp domain maps to 99-300; it reads KLFFEKAGIR…YEEMIQTFVN (202 aa). 126–181 serves as a coordination point for ATP; that stretch reads NFTGTYPVVVKPNQEGSTIGLTVAETEEELLQGIEEAFRHDDTILIEEFIAGTEVT.

Belongs to the D-alanine--D-alanine ligase family.

It is found in the cytoplasm. It catalyses the reaction 2 D-alanine + ATP = D-alanyl-D-alanine + ADP + phosphate + H(+). The protein operates within cell wall biogenesis; peptidoglycan biosynthesis. Functionally, cell wall formation. The polypeptide is D-alanine--D-alanine ligase (Halalkalibacterium halodurans (strain ATCC BAA-125 / DSM 18197 / FERM 7344 / JCM 9153 / C-125) (Bacillus halodurans)).